The primary structure comprises 437 residues: Ribosomal protein uS12 methylthiotransferase RimO (437 aa).

The MTTase N-terminal domain occupies 4–114 (PRISFVSLGC…VIEAVHTAIP (111 aa)). Residues Cys13, Cys49, Cys78, Cys145, Cys149, and Cys152 each coordinate [4Fe-4S] cluster. The Radical SAM core domain maps to 131–369 (LTPRHYAYLK…MAKQQQISTH (239 aa)). In terms of domain architecture, TRAM spans 372–437 (KKKIGKRLQV…DAYDLYGIAV (66 aa)).

This sequence belongs to the methylthiotransferase family. RimO subfamily. The cofactor is [4Fe-4S] cluster.

It is found in the cytoplasm. It catalyses the reaction L-aspartate(89)-[ribosomal protein uS12]-hydrogen + (sulfur carrier)-SH + AH2 + 2 S-adenosyl-L-methionine = 3-methylsulfanyl-L-aspartate(89)-[ribosomal protein uS12]-hydrogen + (sulfur carrier)-H + 5'-deoxyadenosine + L-methionine + A + S-adenosyl-L-homocysteine + 2 H(+). In terms of biological role, catalyzes the methylthiolation of an aspartic acid residue of ribosomal protein uS12. This chain is Ribosomal protein uS12 methylthiotransferase RimO, found in Bartonella tribocorum (strain CIP 105476 / IBS 506).